We begin with the raw amino-acid sequence, 210 residues long: uncharacterized protein (210 aa).

This is an uncharacterized protein from Treponema pallidum (strain Nichols).